An 81-amino-acid chain; its full sequence is MKTLLLTLAAATIVCLDLGYTLKCNKLIPIASKTCPAGMNLCYKMFMMSDLTIPVKRGCIDVCPKNSLLVKYVCCNTDRCN.

Residues 1-21 (MKTLLLTLAAATIVCLDLGYT) form the signal peptide. 4 disulfide bridges follow: Cys-24–Cys-42, Cys-35–Cys-59, Cys-63–Cys-74, and Cys-75–Cys-80.

Belongs to the three-finger toxin family. Short-chain subfamily. Type IA cytotoxin sub-subfamily. In terms of assembly, monomer in solution; Homodimer and oligomer in the presence of negatively charged lipids forming a pore with a size ranging between 20 and 30 Angstroms. In terms of tissue distribution, expressed by the venom gland.

The protein localises to the secreted. It localises to the target cell membrane. Shows cytolytic activity on many different cells by forming pore in lipid membranes. In vivo, increases heart rate or kills the animal by cardiac arrest. In addition, it binds to heparin with high affinity, interacts with Kv channel-interacting protein 1 (KCNIP1) in a calcium-independent manner, and binds to integrin alpha-V/beta-3 (ITGAV/ITGB3) with moderate affinity. The sequence is that of Cytotoxin I-like P-15 from Naja atra (Chinese cobra).